The primary structure comprises 316 residues: MAAPGEIILEDVPASVNLFRTLQDQVTKVTAHVQALTQKVRSGIYNTDKGLSFLELKDQLLLFYLQDLTHLMLEKTNGKSIKGNPGILRLVELRTVLEKMRPIDQKLKYQIDKLVRASVTGSLGENDPLRFKPNPQNLISKLSEADEGESDSGEDCAESGNAKKPQSKVKKYIPPRLAPVHYDDTEAEREHRIIERAKKLALSSSTIRELKEQYSDAPEEIREGRAYHMMRHDKEEQHRINHEESMMVRLNMTRKEKARKKRVLAMTSQLNSLTHFSDISALTGGEGRTDDLVPSVKKSRKGPKKSKKRKGFRKRH.

Disordered regions lie at residues 143-172 (SEAD…VKKY) and 280-316 (SALT…RKRH). A compositionally biased stretch (acidic residues) spans 145–157 (ADEGESDSGEDCA). Residues 297–316 (KKSRKGPKKSKKRKGFRKRH) are compositionally biased toward basic residues.

This sequence belongs to the SAS10 family. Part of the small subunit (SSU) processome, composed of more than 70 proteins and the RNA chaperone small nucleolar RNA (snoRNA) U3.

It is found in the nucleus. It localises to the nucleolus. Its subcellular location is the chromosome. The protein localises to the centromere. The protein resides in the cytoplasm. It is found in the cell projection. It localises to the axon. Its subcellular location is the dendrite. The protein localises to the filopodium. Its function is as follows. Part of the small subunit (SSU) processome, first precursor of the small eukaryotic ribosomal subunit. During the assembly of the SSU processome in the nucleolus, many ribosome biogenesis factors, an RNA chaperone and ribosomal proteins associate with the nascent pre-rRNA and work in concert to generate RNA folding, modifications, rearrangements and cleavage as well as targeted degradation of pre-ribosomal RNA by the RNA exosome. Its dissociation from the complex determines the transition from state pre-A1 to state pre-A1*. May inhibit mRNA translation. The polypeptide is Neuroguidin (ngdn) (Xenopus tropicalis (Western clawed frog)).